Consider the following 353-residue polypeptide: 2,4-diaminopentanoate dehydrogenase (353 aa).

The protein belongs to the DapB family. Homodimer.

It carries out the reaction (2R,4S)-2,4-diaminopentanoate + NAD(+) + H2O = (2R)-2-amino-4-oxopentanoate + NH4(+) + NADH + H(+). The catalysed reaction is (2R,4S)-2,4-diaminopentanoate + NADP(+) + H2O = (2R)-2-amino-4-oxopentanoate + NH4(+) + NADPH + H(+). Its activity is regulated as follows. Inhibited by p-chloromercuribenzoate, iodoacetate and N-ethylmaleimide. Functionally, involved in the ornithine fermentation pathway. Catalyzes the oxidative deamination of (2R,4S)-2,4-diaminopentanoate (DAP) to yield 2-amino-4-ketopentanoate (AKP). The polypeptide is 2,4-diaminopentanoate dehydrogenase (Acetoanaerobium sticklandii (strain ATCC 12662 / DSM 519 / JCM 1433 / CCUG 9281 / NCIMB 10654 / HF) (Clostridium sticklandii)).